A 267-amino-acid polypeptide reads, in one-letter code: Staphylococcal secretory antigen ssaA2 (267 aa).

The signal sequence occupies residues 1–27; the sequence is MKKIATATIATAGFATIAIASGNQAHA. 7 tandem repeats follow at residues 83-85, 86-88, 89-91, 95-97, 101-103, 104-106, and 113-115. The segment at 83–115 is 7 X 3 AA repeats of Y-[NS]-N; sequence YNNYNNYNNGYSYNNYSRYNNYSNNNQSYNYNN. A Peptidase C51 domain is found at 146–267; it reads MAPSSNGRSI…SQAAGYNFIH (122 aa).

The protein resides in the secreted. Its function is as follows. Not known; immunogenic protein. In Staphylococcus aureus (strain NCTC 8325 / PS 47), this protein is Staphylococcal secretory antigen ssaA2 (ssaA2).